The primary structure comprises 130 residues: Fluoride-specific ion channel FluC (130 aa).

Helical transmembrane passes span F3 to G23, G39 to V59, F67 to L87, and I102 to L122. Residues G77 and T80 each contribute to the Na(+) site.

The protein belongs to the fluoride channel Fluc/FEX (TC 1.A.43) family.

Its subcellular location is the cell inner membrane. It catalyses the reaction fluoride(in) = fluoride(out). Na(+) is not transported, but it plays an essential structural role and its presence is essential for fluoride channel function. Its function is as follows. Fluoride-specific ion channel. Important for reducing fluoride concentration in the cell, thus reducing its toxicity. This chain is Fluoride-specific ion channel FluC, found in Helicobacter pylori (strain P12).